We begin with the raw amino-acid sequence, 84 residues long: Exodeoxyribonuclease 7 small subunit (84 aa).

The protein belongs to the XseB family. Heterooligomer composed of large and small subunits.

The protein resides in the cytoplasm. It catalyses the reaction Exonucleolytic cleavage in either 5'- to 3'- or 3'- to 5'-direction to yield nucleoside 5'-phosphates.. Its function is as follows. Bidirectionally degrades single-stranded DNA into large acid-insoluble oligonucleotides, which are then degraded further into small acid-soluble oligonucleotides. In Caulobacter vibrioides (strain ATCC 19089 / CIP 103742 / CB 15) (Caulobacter crescentus), this protein is Exodeoxyribonuclease 7 small subunit.